The chain runs to 470 residues: Cysteine--tRNA ligase (470 aa).

C31 is a Zn(2+) binding site. The 'HIGH' region motif lies at P33–H43. The Zn(2+) site is built by C209, H234, and E238. Positions K266 to S270 match the 'KMSKS' region motif. K269 lines the ATP pocket.

Belongs to the class-I aminoacyl-tRNA synthetase family. Zn(2+) serves as cofactor.

Its subcellular location is the cytoplasm. The catalysed reaction is tRNA(Cys) + L-cysteine + ATP = L-cysteinyl-tRNA(Cys) + AMP + diphosphate. The protein is Cysteine--tRNA ligase of Saccharolobus solfataricus (strain ATCC 35092 / DSM 1617 / JCM 11322 / P2) (Sulfolobus solfataricus).